A 431-amino-acid polypeptide reads, in one-letter code: ATP-dependent protease ATPase subunit HslU (431 aa).

ATP-binding positions include V18, 60 to 65 (GVGKTE), D244, E309, and R381.

This sequence belongs to the ClpX chaperone family. HslU subfamily. As to quaternary structure, a double ring-shaped homohexamer of HslV is capped on each side by a ring-shaped HslU homohexamer. The assembly of the HslU/HslV complex is dependent on binding of ATP.

The protein localises to the cytoplasm. ATPase subunit of a proteasome-like degradation complex; this subunit has chaperone activity. The binding of ATP and its subsequent hydrolysis by HslU are essential for unfolding of protein substrates subsequently hydrolyzed by HslV. HslU recognizes the N-terminal part of its protein substrates and unfolds these before they are guided to HslV for hydrolysis. This chain is ATP-dependent protease ATPase subunit HslU, found in Caulobacter sp. (strain K31).